Here is a 25-residue protein sequence, read N- to C-terminus: Hemocyanin subunit 2 (25 aa).

This sequence belongs to the tyrosinase family. Hemocyanin subfamily. In terms of tissue distribution, hemolymph.

The protein localises to the secreted. Its subcellular location is the extracellular space. Hemocyanins are copper-containing oxygen carriers occurring freely dissolved in the hemolymph of many mollusks and arthropods. This Carcinus maenas (Common shore crab) protein is Hemocyanin subunit 2.